The chain runs to 671 residues: DNA ligase (671 aa).

Residues aspartate 31–aspartate 35, serine 80–leucine 81, and glutamate 110 each bind NAD(+). The active-site N6-AMP-lysine intermediate is the lysine 112. Residues arginine 133, glutamate 167, lysine 283, and lysine 307 each contribute to the NAD(+) site. Zn(2+)-binding residues include cysteine 401, cysteine 404, cysteine 419, and cysteine 424. One can recognise a BRCT domain in the interval glutamate 587–glutamate 671.

The protein belongs to the NAD-dependent DNA ligase family. LigA subfamily. The cofactor is Mg(2+). Mn(2+) is required as a cofactor.

The catalysed reaction is NAD(+) + (deoxyribonucleotide)n-3'-hydroxyl + 5'-phospho-(deoxyribonucleotide)m = (deoxyribonucleotide)n+m + AMP + beta-nicotinamide D-nucleotide.. Its function is as follows. DNA ligase that catalyzes the formation of phosphodiester linkages between 5'-phosphoryl and 3'-hydroxyl groups in double-stranded DNA using NAD as a coenzyme and as the energy source for the reaction. It is essential for DNA replication and repair of damaged DNA. The polypeptide is DNA ligase (Listeria monocytogenes serotype 4a (strain HCC23)).